We begin with the raw amino-acid sequence, 636 residues long: 1-deoxy-D-xylulose-5-phosphate synthase (636 aa).

Thiamine diphosphate contacts are provided by residues histidine 73 and 114–116 (SHA). Residue aspartate 146 participates in Mg(2+) binding. Thiamine diphosphate contacts are provided by residues 147–148 (GA), asparagine 176, tyrosine 287, and glutamate 368. Asparagine 176 contributes to the Mg(2+) binding site.

Belongs to the transketolase family. DXPS subfamily. As to quaternary structure, homodimer. Mg(2+) serves as cofactor. The cofactor is thiamine diphosphate.

The catalysed reaction is D-glyceraldehyde 3-phosphate + pyruvate + H(+) = 1-deoxy-D-xylulose 5-phosphate + CO2. It participates in metabolic intermediate biosynthesis; 1-deoxy-D-xylulose 5-phosphate biosynthesis; 1-deoxy-D-xylulose 5-phosphate from D-glyceraldehyde 3-phosphate and pyruvate: step 1/1. Its function is as follows. Catalyzes the acyloin condensation reaction between C atoms 2 and 3 of pyruvate and glyceraldehyde 3-phosphate to yield 1-deoxy-D-xylulose-5-phosphate (DXP). In Corynebacterium glutamicum (strain ATCC 13032 / DSM 20300 / JCM 1318 / BCRC 11384 / CCUG 27702 / LMG 3730 / NBRC 12168 / NCIMB 10025 / NRRL B-2784 / 534), this protein is 1-deoxy-D-xylulose-5-phosphate synthase.